A 3298-amino-acid polypeptide reads, in one-letter code: Protocadherin-16 (3298 aa).

A signal peptide spans 1-42; sequence MQKELGIVPSCPGMKSPRPHLLLPLLLLLLLLLGAGVPGAWG. Cadherin domains lie at 43–143, 144–255, 256–362, 367–472, 474–578, 579–685, 686–790, 791–894, 895–1000, 1001–1111, 1112–1211, 1218–1324, 1333–1436, 1437–1546, 1547–1649, 1650–1751, 1752–1855, 1856–1960, 1965–2068, 2069–2171, 2172–2277, 2278–2376, 2377–2482, 2483–2602, 2603–2706, 2707–2813, and 2814–2933; these read QAGS…APAF, PQAR…APAF, NQSR…QPSM, LSAD…APAF, RQLY…EPQF, QRTF…PPQF, YPRE…PPIF, EQLQ…SPAF, PAPE…APRF, NSPT…DPTF, LAVA…SPTF, AGGG…PPDL, VPVV…APAF, ARDP…APVF, ASPS…APTF, QQQE…APTF, GSAH…APAF, PVPA…APTF, LRLR…GPRF, PRAS…APRF, LRPH…RPTI, PQPW…APAF, SQSL…APSF, TLSH…PPVF, TRAS…GPAF, PLNL…DPVF, and LAPA…APDL. The Extracellular segment spans residues 43 to 2940; sequence QAGSLDLQID…PDLNLLLVGA (2898 aa). N-linked (GlcNAc...) asparagine glycans are attached at residues asparagine 217, asparagine 256, and asparagine 402. A glycan (N-linked (GlcNAc...) asparagine) is linked at asparagine 584. N-linked (GlcNAc...) asparagine glycosylation occurs at asparagine 1249. Residue asparagine 1521 is glycosylated (N-linked (GlcNAc...) asparagine). N-linked (GlcNAc...) asparagine glycosylation occurs at asparagine 1718. Asparagine 1996 carries N-linked (GlcNAc...) asparagine glycosylation. The interval 2065-2094 is disordered; it reads GPRFPRASSEATIRENAPPGTPIVSPRAVH. 3 N-linked (GlcNAc...) asparagine glycosylation sites follow: asparagine 2361, asparagine 2428, and asparagine 2569. N-linked (GlcNAc...) asparagine glycosylation is found at asparagine 2761, asparagine 2792, and asparagine 2862. Residues 2941–2961 traverse the membrane as a helical segment; it reads VAASLGVVVVLALAALVLGLV. Over 2962 to 3298 the chain is Cytoplasmic; sequence RARSRKAEAA…EPPDDTELHI (337 aa). The interval 2986–3040 is disordered; it reads LQKLGREPPSPPPSEHLYHQTLPSYGGPGAGGPYPRGGSLDPSHSSGRGSAEAAE. Positions 3011–3020 are enriched in gly residues; the sequence is GGPGAGGPYP. At serine 3055 the chain carries Phosphoserine. Disordered regions lie at residues 3062-3082 and 3233-3298; these read ARGPDSGIQQDADGLSDTSCE and ASHR…ELHI. 2 stretches are compositionally biased toward low complexity: residues 3244–3266 and 3276–3289; these read SLSSAAMSPSFSPSLSPLAARSP and GPSASALSAESGLE.

In terms of assembly, heterophilic interaction with FAT4; this interaction affects their respective protein levels. In terms of tissue distribution, expressed in fibroblasts but not in melanocytes or keratinocytes.

The protein localises to the cell membrane. In terms of biological role, calcium-dependent cell-adhesion protein. Mediates functions in neuroprogenitor cell proliferation and differentiation. In the heart, has a critical role for proper morphogenesis of the mitral valve, acting in the regulation of cell migration involved in valve formation. In Homo sapiens (Human), this protein is Protocadherin-16 (DCHS1).